We begin with the raw amino-acid sequence, 1265 residues long: Nestin (1265 aa).

The tract at residues 1 to 16 is head; the sequence is MELLGVRQPFGPQFQE. Residues 17 to 52 are coil 1A; the sequence is EKYQMLELNHRLESYLGRVKLLEEENKLLREEIHTL. An IF rod domain is found at 17–324; sequence EKYQMLELNH…ALLDSEGLRI (308 aa). A linker 1 region spans residues 53–64; it reads KSSRDPAGQRKA. Residues 65–160 form a coil 1B region; the sequence is QEEALSQARR…QVHQENMETM (96 aa). Residues 161 to 183 are linker 12; that stretch reads QASLKQTKQVLMAPQRVQATSIP. The segment at 184-203 is coil 2A; the sequence is DLGQEYGYKAAQAWQEAANN. Residues 204 to 206 form a linker 2 region; the sequence is YQK. Positions 207–324 are coil 2B; sequence QVGRLEESLN…ALLDSEGLRI (118 aa). Residues 325–1265 are tail; the sequence is DRPTPNKTSS…EGDSWSSGDE (941 aa). Residues 383-402 show a composition bias toward polar residues; that stretch reads PSWTLTRGTPQRPPSSTSMT. 5 disordered regions span residues 383–521, 667–830, 863–1073, 1093–1116, and 1232–1265; these read PSWT…TEVS, FEVE…PDME, HESL…KASQ, AQTT…LESS, and IRDD…SGDE. A compositionally biased stretch (basic and acidic residues) spans 403 to 418; it reads EKTEDHISEETKRSAE. The segment covering 422–441 has biased composition (polar residues); sequence DQLQQEKVQQDWTLESTLPK. Basic and acidic residues predominate over residues 444 to 459; the sequence is AEPKPELQPEEIKVED. The span at 479–496 shows a compositional bias: polar residues; the sequence is LTSVPAEQQGSMSQTPET. Composition is skewed to acidic residues over residues 508–520 and 730–739; these read EVSE…DTEV and LNEDQSEAEE. Composition is skewed to basic and acidic residues over residues 784–796, 803–819, and 863–897; these read YKSD…HIGE, EKER…RFNT, and HESL…KEED. Residues 901–910 show a composition bias toward polar residues; the sequence is FEQNENQQLT. The span at 911-935 shows a compositional bias: basic and acidic residues; that stretch reads EHQHVHTEQVEDKPVHSHETQEHVN. A compositionally biased stretch (low complexity) spans 943–956; that stretch reads SERSQQEQLEESSL. The span at 1015 to 1043 shows a compositional bias: polar residues; it reads PNASQCFQNTSLLAAATPNEQPLTFTNEV. The segment covering 1061 to 1070 has biased composition (basic and acidic residues); the sequence is SEEKSTDEPK. Polar residues-rich tracts occupy residues 1105–1116 and 1242–1251; these read SISPVNENLESS and PAQSKIVQSD. Over residues 1252-1265 the composition is skewed to acidic residues; it reads DSADEGDSWSSGDE.

It belongs to the intermediate filament family. In terms of assembly, forms homodimers and homotetramers in vitro. In mixtures with other intermediate filament proteins such as vimentin and alpha-internexin, preferentially forms heterodimers. In terms of tissue distribution, widely expressed throughout the developing nervous system at 24 hours post-fertilization (hpf). As development progresses, expression becomes restricted to proliferative zones of the developing and postembryonic central nervous system. In the peripheral nervous system, expressed in the cranial ganglia. Also expressed in mesodermal muscle precursor cells and in cranial mesenchymal tissue.

Promotes the disassembly of phosphorylated vimentin intermediate filaments (IF) during mitosis and may play a role in the trafficking and distribution of IF proteins and other cellular factors to daughter cells during progenitor cell division. Required for survival, renewal and mitogen-stimulated proliferation of neural progenitor cells. Required for brain and eye development. The chain is Nestin (nes) from Danio rerio (Zebrafish).